The primary structure comprises 384 residues: Isoafricanol synthase (384 aa).

Residues Asp-95, Asn-245, Ser-249, and Glu-253 each contribute to the Mg(2+) site.

Belongs to the terpene synthase family. Requires Mg(2+) as cofactor.

It catalyses the reaction (2E,6E)-farnesyl diphosphate + H2O = (+)-isoafricanol + diphosphate. Catalyzes the cyclization of farnesyl diphosphate (FPP) to isoafricanol. The polypeptide is Isoafricanol synthase (Streptomyces violaceusniger (strain Tu 4113)).